The primary structure comprises 362 residues: Carbamoyl phosphate synthase small chain (362 aa).

The interval 1–172 (MKAFLVLDNG…SKYIFGTHTG (172 aa)) is CPSase. L-glutamine contacts are provided by serine 45, glycine 224, and glycine 226. In terms of domain architecture, Glutamine amidotransferase type-1 spans 176–362 (KLAVYDYGVK…YDLVEKTKKG (187 aa)). The active-site Nucleophile is cysteine 252. L-glutamine-binding residues include leucine 253, glutamine 256, asparagine 294, glycine 296, and phenylalanine 297. Catalysis depends on residues histidine 335 and glutamate 337.

It belongs to the CarA family. As to quaternary structure, composed of two chains; the small (or glutamine) chain promotes the hydrolysis of glutamine to ammonia, which is used by the large (or ammonia) chain to synthesize carbamoyl phosphate. Tetramer of heterodimers (alpha,beta)4.

The enzyme catalyses hydrogencarbonate + L-glutamine + 2 ATP + H2O = carbamoyl phosphate + L-glutamate + 2 ADP + phosphate + 2 H(+). It catalyses the reaction L-glutamine + H2O = L-glutamate + NH4(+). Its pathway is amino-acid biosynthesis; L-arginine biosynthesis; carbamoyl phosphate from bicarbonate: step 1/1. It functions in the pathway pyrimidine metabolism; UMP biosynthesis via de novo pathway; (S)-dihydroorotate from bicarbonate: step 1/3. Small subunit of the glutamine-dependent carbamoyl phosphate synthetase (CPSase). CPSase catalyzes the formation of carbamoyl phosphate from the ammonia moiety of glutamine, carbonate, and phosphate donated by ATP, constituting the first step of 2 biosynthetic pathways, one leading to arginine and/or urea and the other to pyrimidine nucleotides. The small subunit (glutamine amidotransferase) binds and cleaves glutamine to supply the large subunit with the substrate ammonia. This Leptospira interrogans serogroup Icterohaemorrhagiae serovar Lai (strain 56601) protein is Carbamoyl phosphate synthase small chain.